The sequence spans 185 residues: Threonylcarbamoyl-AMP synthase (185 aa).

Positions 4-185 (SWRVQQAARE…LATGEVVRPG (182 aa)) constitute a YrdC-like domain.

Belongs to the SUA5 family. TsaC subfamily.

Its subcellular location is the cytoplasm. The catalysed reaction is L-threonine + hydrogencarbonate + ATP = L-threonylcarbamoyladenylate + diphosphate + H2O. In terms of biological role, required for the formation of a threonylcarbamoyl group on adenosine at position 37 (t(6)A37) in tRNAs that read codons beginning with adenine. Catalyzes the conversion of L-threonine, HCO(3)(-)/CO(2) and ATP to give threonylcarbamoyl-AMP (TC-AMP) as the acyladenylate intermediate, with the release of diphosphate. The polypeptide is Threonylcarbamoyl-AMP synthase (Pseudomonas entomophila (strain L48)).